The sequence spans 302 residues: Recombination-associated protein RdgC (302 aa).

This sequence belongs to the RdgC family.

The protein resides in the cytoplasm. It is found in the nucleoid. Functionally, may be involved in recombination. This chain is Recombination-associated protein RdgC, found in Actinobacillus succinogenes (strain ATCC 55618 / DSM 22257 / CCUG 43843 / 130Z).